The following is a 310-amino-acid chain: Glutaminase (310 aa).

The substrate site is built by Ser67, Asn118, Glu161, Asn168, Tyr192, Tyr244, and Val262.

The protein belongs to the glutaminase family. In terms of assembly, homotetramer.

It carries out the reaction L-glutamine + H2O = L-glutamate + NH4(+). This is Glutaminase from Legionella pneumophila (strain Lens).